We begin with the raw amino-acid sequence, 287 residues long: Probable endonuclease 4 (287 aa).

Zn(2+) contacts are provided by His69, His109, Glu144, Asp178, His181, His215, Asp228, His230, and Glu260.

It belongs to the AP endonuclease 2 family. The cofactor is Zn(2+).

The catalysed reaction is Endonucleolytic cleavage to 5'-phosphooligonucleotide end-products.. Endonuclease IV plays a role in DNA repair. It cleaves phosphodiester bonds at apurinic or apyrimidinic (AP) sites, generating a 3'-hydroxyl group and a 5'-terminal sugar phosphate. The sequence is that of Probable endonuclease 4 from Thermotoga neapolitana (strain ATCC 49049 / DSM 4359 / NBRC 107923 / NS-E).